The sequence spans 146 residues: Holo-[acyl-carrier-protein] synthase (146 aa).

2 residues coordinate Mg(2+): Asp-9 and Glu-63.

This sequence belongs to the P-Pant transferase superfamily. AcpS family. Requires Mg(2+) as cofactor.

The protein resides in the cytoplasm. The catalysed reaction is apo-[ACP] + CoA = holo-[ACP] + adenosine 3',5'-bisphosphate + H(+). Transfers the 4'-phosphopantetheine moiety from coenzyme A to a Ser of acyl-carrier-protein. The polypeptide is Holo-[acyl-carrier-protein] synthase (Burkholderia ambifaria (strain MC40-6)).